A 77-amino-acid polypeptide reads, in one-letter code: Pi/alpha-stichotoxin-Hmg5b (77 aa).

The first 21 residues, 1 to 21 (MDYQRLLFLFAVAMVITTTVA), serve as a signal peptide directing secretion. The propeptide occupies 22-34 (LPKDTALMDGQLQ). Intrachain disulfides connect Cys-40–Cys-73, Cys-42–Cys-66, and Cys-56–Cys-74. At Met-52 the chain carries Methionine sulfoxide; partial.

The protein belongs to the sea anemone type 3 (BDS) potassium channel toxin family. In terms of processing, toxin occurs in two forms in the mucus, Hmg 1b-2 which is not oxidized and Hmg 1b-2 MetOx which is oxidized at Met-52.

It localises to the secreted. It is found in the nematocyst. In terms of biological role, the non-oxidized toxin is remarkably non-selective with activity on many different ion channels. Weakly and reversibly inhibits rat and human homomeric ASIC1 (isoform ASIC1a) (IC(50)=4.8 uM, and IC(50)=14.6 uM), and ASIC3 (IC(50)=15.9 uM). Molecular modeling interaction with ASIC1a suggests that this peptide hinders the collapse of acidic pockets and stabilizes nonconducting channels state. It activates several potassium channels including Kv1.1/KCNA1, Kv1.2/KCNA2, and drosophila Shaker IR. It moderately to potently inhibits potassium channels including Kv1.3/KCNA3, Kv1.4/KCNA4, Kv1.5/KCNA5, Kv1.6/KCNA6, Kv2.1/KCNB1, Kv4.2/KCND2, Kv7.1/KCNQ1, Kv7.2/Kv7.3 (KCNQ2/KCNQ3), Kv7.4/KCNQ4, hERG/KCNH2, and C.elegans QKT1. On sodium channels, it moderately to potently inhibits Nav1.1/SCN1A, Nav1.2/SCN2A, Nav1.3/SCN3A, Nav1.4/SCN4A, Nav1.5/SCN5A, Nav1.6/SCN8A, Nav1.7/SCN9A, Nav1.8/SCN10A, and B.germanica BgNav. It also moderately to potently inhibits Cav3.1/CACNA1G, Cav3.2/CACNA1H, and Cav3.3/CACNA1I. Significant shifts in the voltage-current relationship are observed on Kv and Nav, depending on the channel isoform, whereas the toxin does not seem to modulate the voltage-sensor domains of Cav channels, acting mainly as a pore blocker. Does not activate nicotinic acetylcholine receptors (nAChR), but potentiates ACh-elicited current of human alpha-7/CHRNA7 nAChR. Is also able to bind T.californica muscle-type nAChRs. In vivo, causes an excitatory effect in mice behavior. Also shows antihyperalgesic and analgesic activity in the acid-induced muscle pain mice model, and weak anti-inflammatory effect in models of acute local inflammation. Its function is as follows. Forms an oxidized toxin derivative (Hmg 1b-2 MetOx). Able to bind T.californica muscle-type nAChRs (alpha-1-beta-1-delta-epsilon (CHRNA1-CHRNB1-CHRND-CHRNE)). This Heteractis magnifica (Magnificent sea anemone) protein is Pi/alpha-stichotoxin-Hmg5b.